We begin with the raw amino-acid sequence, 975 residues long: Glycine dehydrogenase (decarboxylating) (975 aa).

An N6-(pyridoxal phosphate)lysine modification is found at lysine 723.

Belongs to the GcvP family. In terms of assembly, the glycine cleavage system is composed of four proteins: P, T, L and H. It depends on pyridoxal 5'-phosphate as a cofactor.

The enzyme catalyses N(6)-[(R)-lipoyl]-L-lysyl-[glycine-cleavage complex H protein] + glycine + H(+) = N(6)-[(R)-S(8)-aminomethyldihydrolipoyl]-L-lysyl-[glycine-cleavage complex H protein] + CO2. The glycine cleavage system catalyzes the degradation of glycine. The P protein binds the alpha-amino group of glycine through its pyridoxal phosphate cofactor; CO(2) is released and the remaining methylamine moiety is then transferred to the lipoamide cofactor of the H protein. The protein is Glycine dehydrogenase (decarboxylating) of Burkholderia vietnamiensis (strain G4 / LMG 22486) (Burkholderia cepacia (strain R1808)).